We begin with the raw amino-acid sequence, 428 residues long: Enolase (428 aa).

Gln163 provides a ligand contact to (2R)-2-phosphoglycerate. Glu205 acts as the Proton donor in catalysis. Positions 242, 286, and 313 each coordinate Mg(2+). (2R)-2-phosphoglycerate is bound by residues Lys338, Arg367, Ser368, and Lys389. Lys338 acts as the Proton acceptor in catalysis.

This sequence belongs to the enolase family. Mg(2+) is required as a cofactor.

It is found in the cytoplasm. The protein resides in the secreted. Its subcellular location is the cell surface. The enzyme catalyses (2R)-2-phosphoglycerate = phosphoenolpyruvate + H2O. It participates in carbohydrate degradation; glycolysis; pyruvate from D-glyceraldehyde 3-phosphate: step 4/5. Its function is as follows. Catalyzes the reversible conversion of 2-phosphoglycerate (2-PG) into phosphoenolpyruvate (PEP). It is essential for the degradation of carbohydrates via glycolysis. The sequence is that of Enolase from Bordetella avium (strain 197N).